The following is a 156-amino-acid chain: Calglandulin (156 aa).

EF-hand domains lie at 8–43 (EQITEYKGIFEMFDEEGNGLVKTDDLESLMSLVGIN), 44–79 (PTKRDLANMAKDVDKDKKGTFNCDGFLALMGIYHEK), 82–117 (NQDEELRAAFKVFDKEHKGYIEWDTLKYVLMNAGEP), and 118–153 (LNEQEAELMMKEADKDGDGTIDYEEFVAMMTGESFK). Residues D131, D133, D135, T137, and E142 each contribute to the Ca(2+) site.

It belongs to the calmodulin family. Calglandulin subfamily. In terms of tissue distribution, expressed by the venom gland.

It localises to the cytoplasm. Functionally, may be involved in the cellular control mechanism of the secretion of toxins from the gland into the venom. This chain is Calglandulin, found in Bothrops insularis (Golden lancehead).